Consider the following 135-residue polypeptide: Ribosome-binding factor A (135 aa).

Belongs to the RbfA family. In terms of assembly, monomer. Binds 30S ribosomal subunits, but not 50S ribosomal subunits or 70S ribosomes.

The protein resides in the cytoplasm. Functionally, one of several proteins that assist in the late maturation steps of the functional core of the 30S ribosomal subunit. Associates with free 30S ribosomal subunits (but not with 30S subunits that are part of 70S ribosomes or polysomes). Required for efficient processing of 16S rRNA. May interact with the 5'-terminal helix region of 16S rRNA. In Hahella chejuensis (strain KCTC 2396), this protein is Ribosome-binding factor A.